Consider the following 281-residue polypeptide: Arabinooligosaccharides transport system permease protein AraQ (281 aa).

The next 6 helical transmembrane spans lie at 15 to 35 (LTLF…CLLL), 81 to 101 (LVLG…IGYG), 112 to 132 (IIFV…MLPL), 142 to 162 (IDSY…VFFF), 185 to 205 (FGIF…AMII), and 247 to 267 (MLIS…LFFQ). Positions 77–266 (FFNSLVLGLF…LPVIIIFLFF (190 aa)) constitute an ABC transmembrane type-1 domain.

Belongs to the binding-protein-dependent transport system permease family. MalFG subfamily. In terms of assembly, the complex is composed of two ATP-binding proteins (MsmX), two transmembrane proteins (AraP and AraQ) and a solute-binding protein (AraN).

The protein resides in the cell membrane. Its function is as follows. Part of the ABC transporter complex AraNPQ involved in the uptake of arabinooligosaccharides. Transports alpha-1,5-arabinooligosaccharides, at least up to four L-arabinosyl units. Responsible for the translocation of the substrate across the membrane. This is Arabinooligosaccharides transport system permease protein AraQ from Bacillus subtilis (strain 168).